Reading from the N-terminus, the 221-residue chain is uncharacterized protein (221 aa).

Helical transmembrane passes span tyrosine 33–isoleucine 55, phenylalanine 70–valine 92, leucine 99–isoleucine 121, tyrosine 125–leucine 147, tyrosine 154–isoleucine 176, and isoleucine 186–isoleucine 208.

The protein localises to the cell membrane. This is an uncharacterized protein from Aquifex aeolicus (strain VF5).